The chain runs to 339 residues: Large ribosomal subunit protein uL10 (339 aa).

Residues 300–339 (AAAQATPSVEEREEEEKPEEEEEEEEKEEEAIEGLGALFG) form a disordered region. The segment covering 310–331 (EREEEEKPEEEEEEEEKEEEAI) has biased composition (acidic residues).

This sequence belongs to the universal ribosomal protein uL10 family. As to quaternary structure, part of the 50S ribosomal subunit. Forms part of the ribosomal stalk which helps the ribosome interact with GTP-bound translation factors. Forms a heptameric L10(L12)2(L12)2(L12)2 complex, where L10 forms an elongated spine to which the L12 dimers bind in a sequential fashion.

Functionally, forms part of the ribosomal stalk, playing a central role in the interaction of the ribosome with GTP-bound translation factors. This chain is Large ribosomal subunit protein uL10, found in Archaeoglobus fulgidus (strain ATCC 49558 / DSM 4304 / JCM 9628 / NBRC 100126 / VC-16).